The following is a 1465-amino-acid chain: Copper-transporting ATPase 2 (1465 aa).

Over 1–653 the chain is Cytoplasmic; that stretch reads MPEQERQITA…KMEIKQWKKS (653 aa). Ser-23 bears the Phosphoserine mark. HMA domains are found at residues 58-124 and 143-209; these read ATST…FEAS and AVVK…FEAA. Cys-69, Cys-72, Cys-154, and Cys-157 together coordinate Cu(+). Residues 230 to 249 form a disordered region; sequence TNPKRPLSSANQNFNNSETL. HMA domains are found at residues 257–323 and 359–425; these read VTLQ…PGNF and STTL…FEAS. Residues Cys-268 and Cys-271 each coordinate Cu(+). A disordered region spans residues 322–355; the sequence is NFKVSLPDGAEGSGTDHRSSSSHSPGSPPRNQVQ. 2 residues coordinate Cu(+): Cys-370 and Cys-373. Phosphoserine occurs at positions 478 and 481. HMA domains lie at 488 to 554 and 564 to 630; these read QKCF…FEAA and GNIE…FHAS. Residues Cys-499, Cys-502, Cys-575, and Cys-578 each coordinate Cu(+). Residues 654–675 traverse the membrane as a helical segment; that stretch reads FLCSLVFGIPVMALMIYMLIPS. The Extracellular portion of the chain corresponds to 676–697; the sequence is NEPHQSMVLDHNIIPGLSILNL. The helical transmembrane segment at 698–717 threads the bilayer; that stretch reads IFFILCTFVQLLGGWYFYVQ. The Cytoplasmic segment spans residues 718–724; that stretch reads AYKSLRH. A helical membrane pass occupies residues 725 to 745; that stretch reads RSANMDVLIVLATSIAYVYSL. The Extracellular segment spans residues 746-764; the sequence is VILVVAVAEKAERSPVTFF. Residues 765 to 785 form a helical membrane-spanning segment; it reads DTPPMLFVFIALGRWLEHLAK. Residues 786–919 are Cytoplasmic-facing; the sequence is SKTSEALAKL…KAPIQQLADR (134 aa). Residues 920–942 traverse the membrane as a helical segment; sequence FSGYFVPFIIIMSTLTLVVWIVI. At 943–972 the chain is on the extracellular side; sequence GFIDFGVVQRYFPNPNKHISQTEVIIRFAF. The helical transmembrane segment at 973 to 994 threads the bilayer; that stretch reads QTSITVLCIACPCSLGLATPTA. The Cytoplasmic portion of the chain corresponds to 995–1322; the sequence is VMVGTGVAAQ…LSKRTVRRIR (328 aa). Asp-1027 functions as the 4-aspartylphosphate intermediate in the catalytic mechanism. Asp-1267 and Asp-1271 together coordinate Mg(2+). Residues 1323–1340 form a helical membrane-spanning segment; it reads INLVLALIYNLVGIPIAA. Topologically, residues 1341–1351 are extracellular; sequence GVFMPIGIVLQ. The chain crosses the membrane as a helical span at residues 1352–1371; the sequence is PWMGSAAMAASSVSVVLSSL. Over 1372–1465 the chain is Cytoplasmic; that stretch reads QLKCYKKPDL…LNGRDEEQYI (94 aa). Ser-1398 bears the Phosphoserine mark.

The protein belongs to the cation transport ATPase (P-type) (TC 3.A.3) family. Type IB subfamily. Monomer. Interacts with COMMD1/MURR1. Interacts with DCTN4, in a copper-dependent manner. Interacts with ATOX1. Interacts (via C-terminus) with ZBTB16/PLZF. In terms of processing, isoform 1 may be proteolytically cleaved at the N-terminus to produce the WND/140 kDa form. Most abundant in liver and kidney and also found in brain. Isoform 2 is expressed in brain but not in liver. The cleaved form WND/140 kDa is found in liver cell lines and other tissues.

The protein localises to the golgi apparatus. It localises to the trans-Golgi network membrane. It is found in the late endosome. Its subcellular location is the golgi apparatus membrane. The protein resides in the cytoplasm. The protein localises to the mitochondrion. The catalysed reaction is Cu(+)(in) + ATP + H2O = Cu(+)(out) + ADP + phosphate + H(+). Copper ion transmembrane transporter involved in the export of copper out of the cells. It is involved in copper homeostasis in the liver, where it ensures the efflux of copper from hepatocytes into the bile in response to copper overload. The protein is Copper-transporting ATPase 2 (ATP7B) of Homo sapiens (Human).